The sequence spans 394 residues: 1-deoxy-D-xylulose 5-phosphate reductoisomerase (394 aa).

Positions 12, 13, 14, 15, 38, 41, and 132 each coordinate NADPH. Lys-133 is a 1-deoxy-D-xylulose 5-phosphate binding site. Glu-134 is an NADPH binding site. A Mn(2+)-binding site is contributed by Asp-156. Residues Ser-157, Glu-158, Ser-182, and His-205 each contribute to the 1-deoxy-D-xylulose 5-phosphate site. Residue Glu-158 coordinates Mn(2+). Gly-211 is a binding site for NADPH. 4 residues coordinate 1-deoxy-D-xylulose 5-phosphate: Ser-218, Asn-223, Lys-224, and Glu-227. Residue Glu-227 coordinates Mn(2+).

It belongs to the DXR family. Requires Mg(2+) as cofactor. It depends on Mn(2+) as a cofactor.

The catalysed reaction is 2-C-methyl-D-erythritol 4-phosphate + NADP(+) = 1-deoxy-D-xylulose 5-phosphate + NADPH + H(+). It participates in isoprenoid biosynthesis; isopentenyl diphosphate biosynthesis via DXP pathway; isopentenyl diphosphate from 1-deoxy-D-xylulose 5-phosphate: step 1/6. Its function is as follows. Catalyzes the NADPH-dependent rearrangement and reduction of 1-deoxy-D-xylulose-5-phosphate (DXP) to 2-C-methyl-D-erythritol 4-phosphate (MEP). The chain is 1-deoxy-D-xylulose 5-phosphate reductoisomerase from Paenarthrobacter aurescens (strain TC1).